We begin with the raw amino-acid sequence, 507 residues long: Ribonuclease Y (507 aa).

Residues 1 to 21 (MLWYIVAGAGGLLIGYLIANY) traverse the membrane as a helical segment. The region spanning 197 to 282 (TVSTVSLPSD…EMYEKAKQEV (86 aa)) is the KH domain. The 94-residue stretch at 323 to 416 (VLNHSIEVAL…VAAADALSAA (94 aa)) folds into the HD domain.

The protein belongs to the RNase Y family.

It is found in the cell membrane. Its function is as follows. Endoribonuclease that initiates mRNA decay. The protein is Ribonuclease Y of Thermotoga sp. (strain RQ2).